Reading from the N-terminus, the 1363-residue chain is Spike glycoprotein (1363 aa).

The N-terminal stretch at 1-13 (MFLILLISLPMAL) is a signal peptide. The Extracellular portion of the chain corresponds to 14 to 1307 (AVIGDLKCTT…GTYEYYVKWP (1294 aa)). A BetaCoV S1-NTD domain is found at 15-298 (VIGDLKCTTV…DFMSEIKCKT (284 aa)). 5 disulfides stabilise this stretch: C21/C165, C160/C193, C172/C252, C286/C296, and C331/C356. 2 N-linked (GlcNAc...) asparagine; by host glycosylation sites follow: N59 and N133. The N-linked (GlcNAc...) asparagine; by host glycan is linked to N198. Residues 329–617 (PDCNIEAWLN…DVNSGTTCST (289 aa)) form the BetaCoV S1-CTD domain. N359 is a glycosylation site (N-linked (GlcNAc...) asparagine; by host). Cystine bridges form between C374–C427 and C386–C615. 7 N-linked (GlcNAc...) asparagine; by host glycosylation sites follow: N437, N649, N676, N696, N714, N739, and N788. Fusion peptide stretches follow at residues 914-935 (SAIE…VEAY) and 933-953 (EAYN…VQSY). N937 carries an N-linked (GlcNAc...) asparagine; by host glycan. An intrachain disulfide couples C938 to C949. The interval 1014–1064 (QKLIANAFNNALDAIQEGFDATNSALVKIQAVVNANAEALNNLLQQLSNRF) is heptad repeat 1. A coiled-coil region spans residues 1043–1087 (QAVVNANAEALNNLLQQLSNRFGAISSSLQEILSRLDALEAQAQI). N-linked (GlcNAc...) asparagine; by host glycans are attached at residues N1194, N1224, N1234, N1253, N1267, and N1288. Residues 1258-1296 (APDLSLDYINVTFLDLQDEMNRLQEAIKVLNQSYINLKD) form a heptad repeat 2 region. Residues 1269–1297 (TFLDLQDEMNRLQEAIKVLNQSYINLKDI) adopt a coiled-coil conformation. The chain crosses the membrane as a helical span at residues 1308–1328 (WYVWLLIGLAGVAMLVLLFFI). Residues 1329-1363 (CCCTGCGTSCFKKCGGCCDDYTGHQELVIKTSHDD) lie on the Cytoplasmic side of the membrane. The KxHxx motif lies at 1359 to 1363 (TSHDD).

It belongs to the betacoronaviruses spike protein family. Homotrimer; each monomer consists of a S1 and a S2 subunit. The resulting peplomers protrude from the virus surface as spikes. Post-translationally, specific enzymatic cleavages in vivo yield mature proteins. The precursor is processed into S1 and S2 by host cell furin or another cellular protease to yield the mature S1 and S2 proteins. Additionally, a second cleavage leads to the release of a fusion peptide after viral attachment to host cell receptor. The cytoplasmic Cys-rich domain is palmitoylated. Spike glycoprotein is digested within host endosomes.

It localises to the virion membrane. Its subcellular location is the host endoplasmic reticulum-Golgi intermediate compartment membrane. It is found in the host cell membrane. Attaches the virion to the cell membrane by interacting with host receptor, initiating the infection. Its function is as follows. Mediates fusion of the virion and cellular membranes by acting as a class I viral fusion protein. Under the current model, the protein has at least three conformational states: pre-fusion native state, pre-hairpin intermediate state, and post-fusion hairpin state. During viral and target cell membrane fusion, the coiled coil regions (heptad repeats) assume a trimer-of-hairpins structure, positioning the fusion peptide in close proximity to the C-terminal region of the ectodomain. The formation of this structure appears to drive apposition and subsequent fusion of viral and target cell membranes. Functionally, acts as a viral fusion peptide which is unmasked following S2 cleavage occurring upon virus endocytosis. In Bos taurus (Bovine), this protein is Spike glycoprotein.